The following is a 44-amino-acid chain: Large ribosomal subunit protein bL34 (44 aa).

Residues 1–26 (MKMTFQPKKRQRAKVHGFRQRMKTAG) form a disordered region. Positions 7-22 (PKKRQRAKVHGFRQRM) are enriched in basic residues.

It belongs to the bacterial ribosomal protein bL34 family.

This is Large ribosomal subunit protein bL34 from Agathobacter rectalis (strain ATCC 33656 / DSM 3377 / JCM 17463 / KCTC 5835 / VPI 0990) (Eubacterium rectale).